An 808-amino-acid chain; its full sequence is Probable E3 ubiquitin-protein ligase hulA (808 aa).

The region spanning methionine 1–arginine 112 is the C2 domain. Disordered stretches follow at residues asparagine 134–arginine 231 and arginine 275–aspartate 346. 2 stretches are compositionally biased toward polar residues: residues glutamine 142–leucine 159 and glycine 171–threonine 198. Over residues valine 199–alanine 210 the composition is skewed to low complexity. A compositionally biased stretch (polar residues) spans serine 211–aspartate 220. The region spanning glycine 223–serine 256 is the WW 1 domain. Residues arginine 275–threonine 288 are compositionally biased toward basic and acidic residues. The span at glycine 289 to threonine 303 shows a compositional bias: polar residues. Positions alanine 317 to glycine 326 are enriched in low complexity. 2 WW domains span residues glycine 326–arginine 359 and glycine 386–leucine 419. Residues serine 475–glutamate 808 enclose the HECT domain. Cysteine 776 functions as the Glycyl thioester intermediate in the catalytic mechanism.

It belongs to the RSP5/NEDD4 family. In terms of assembly, interacts with creD.

The protein resides in the cytoplasm. It carries out the reaction S-ubiquitinyl-[E2 ubiquitin-conjugating enzyme]-L-cysteine + [acceptor protein]-L-lysine = [E2 ubiquitin-conjugating enzyme]-L-cysteine + N(6)-ubiquitinyl-[acceptor protein]-L-lysine.. It functions in the pathway protein modification; protein ubiquitination. In terms of biological role, E3 ubiquitin-protein ligase which accepts ubiquitin from an E2 ubiquitin-conjugating enzyme in the form of a thioester and then directly transfers the ubiquitin to targeted substrates. Probably involved in the regulatory network controlling carbon source utilization. This is Probable E3 ubiquitin-protein ligase hulA (hulA) from Aspergillus terreus (strain NIH 2624 / FGSC A1156).